The sequence spans 1372 residues: DNA-directed RNA polymerase subunit beta' (1372 aa).

Zn(2+) is bound by residues Cys-69, Cys-71, Cys-84, and Cys-87. Mg(2+) is bound by residues Asp-460, Asp-462, and Asp-464. Zn(2+) contacts are provided by Cys-808, Cys-882, Cys-889, and Cys-892.

Belongs to the RNA polymerase beta' chain family. In terms of assembly, the RNAP catalytic core consists of 2 alpha, 1 beta, 1 beta' and 1 omega subunit. When a sigma factor is associated with the core the holoenzyme is formed, which can initiate transcription. Mg(2+) serves as cofactor. It depends on Zn(2+) as a cofactor.

The catalysed reaction is RNA(n) + a ribonucleoside 5'-triphosphate = RNA(n+1) + diphosphate. Functionally, DNA-dependent RNA polymerase catalyzes the transcription of DNA into RNA using the four ribonucleoside triphosphates as substrates. The protein is DNA-directed RNA polymerase subunit beta' of Rickettsia prowazekii (strain Madrid E).